A 443-amino-acid polypeptide reads, in one-letter code: Trigger factor (443 aa).

Residues 161 to 246 (GDKVVIDFQG…IKKIMEGKLP (86 aa)) form the PPIase FKBP-type domain.

Belongs to the FKBP-type PPIase family. Tig subfamily.

It localises to the cytoplasm. The catalysed reaction is [protein]-peptidylproline (omega=180) = [protein]-peptidylproline (omega=0). Functionally, involved in protein export. Acts as a chaperone by maintaining the newly synthesized protein in an open conformation. Functions as a peptidyl-prolyl cis-trans isomerase. In Legionella pneumophila (strain Lens), this protein is Trigger factor.